Here is a 439-residue protein sequence, read N- to C-terminus: Structure-specific endonuclease subunit SLX1 homolog (439 aa).

Disordered regions lie at residues Met-1–Lys-28 and Asp-117–Leu-140. The segment covering Glu-125–Asn-136 has biased composition (basic and acidic residues). Residues Glu-166–Lys-253 enclose the GIY-YIG domain. The segment at Cys-335 to Cys-390 adopts an SLX1-type zinc-finger fold.

Belongs to the SLX1 family. Forms a heterodimer with him-18/slx-4. The cofactor is a divalent metal cation.

It is found in the nucleus. Catalytic subunit of a heterodimeric structure-specific endonuclease that resolves DNA secondary structures generated during DNA repair and recombination. Has endonuclease activity towards branched DNA substrates, introducing single-strand cuts in duplex DNA close to junctions with ss-DNA (Potential). Has a preference for replication forks over 5' flap structures or Holliday junctions and shows much lower activity toward 3' flap structures. Required for proper crossover distribution through inhibition of crossover formation at the central region of chromosomes. In Caenorhabditis briggsae, this protein is Structure-specific endonuclease subunit SLX1 homolog.